Here is a 376-residue protein sequence, read N- to C-terminus: Cellular tumor antigen p53 (376 aa).

Residues 1–36 (MEGNGERDTMMVEPPDSQEFAELWLRNLIVRDNSLW) are transcription activation (acidic). Residues 77–268 (DYPGLLNFTL…KTEESNFKKQ (192 aa)) mediate DNA binding. The segment covering 150–159 (RCPHHERSND) has biased composition (basic and acidic residues). Positions 150–171 (RCPHHERSNDSSDGPAPPGHLL) are disordered. 4 residues coordinate Zn(2+): C151, H154, C214, and C218. Positions 249-256 (RVCACPGR) are interaction with DNA. 2 stretches are compositionally biased toward basic and acidic residues: residues 257 to 270 (DRKT…KQQE) and 282 to 294 (SMKD…EASK). Residues 257 to 306 (DRKTEESNFKKQQEPKTSGKTLTKRSMKDPPSHPEASKKSKNSSSDDEIY) form a disordered region. The Bipartite nuclear localization signal motif lies at 280 to 297 (KRSMKDPPSHPEASKKSK). The tract at residues 303-334 (DEIYTLQVRGKERYEFLKKINDGLELSDVVPP) is oligomerization. Positions 317-328 (EFLKKINDGLEL) match the Nuclear export signal motif. A disordered region spans residues 342–376 (QKLLSKTCRKERDGAAGEPKRGKKRLVKEEKCDSD). The segment at 347-372 (KTCRKERDGAAGEPKRGKKRLVKEEK) is basic (repression of DNA-binding). Residues 349–361 (CRKERDGAAGEPK) are compositionally biased toward basic and acidic residues.

Belongs to the p53 family. In terms of assembly, binds DNA as a homotetramer. Zn(2+) serves as cofactor.

Its subcellular location is the cytoplasm. It localises to the nucleus. In terms of biological role, multifunctional transcription factor that induces cell cycle arrest, DNA repair or apoptosis upon binding to its target DNA sequence. Acts as a tumor suppressor in many tumor types; induces growth arrest or apoptosis depending on the physiological circumstances and cell type. Negatively regulates cell division by controlling expression of a set of genes required for this process. One of the activated genes is an inhibitor of cyclin-dependent kinases. Apoptosis induction seems to be mediated either by stimulation of BAX and FAS antigen expression, or by repression of Bcl-2 expression. The polypeptide is Cellular tumor antigen p53 (tp53) (Ictalurus punctatus (Channel catfish)).